Here is a 346-residue protein sequence, read N- to C-terminus: Uroporphyrinogen decarboxylase (346 aa).

Substrate contacts are provided by residues 26–30, phenylalanine 45, aspartate 76, tyrosine 153, serine 208, and histidine 323; that span reads RQAGR.

This sequence belongs to the uroporphyrinogen decarboxylase family. Homodimer.

Its subcellular location is the cytoplasm. It catalyses the reaction uroporphyrinogen III + 4 H(+) = coproporphyrinogen III + 4 CO2. The protein operates within porphyrin-containing compound metabolism; protoporphyrin-IX biosynthesis; coproporphyrinogen-III from 5-aminolevulinate: step 4/4. Functionally, catalyzes the decarboxylation of four acetate groups of uroporphyrinogen-III to yield coproporphyrinogen-III. This is Uroporphyrinogen decarboxylase from Prochlorococcus marinus subsp. pastoris (strain CCMP1986 / NIES-2087 / MED4).